Here is an 80-residue protein sequence, read N- to C-terminus: Exodeoxyribonuclease 7 small subunit (80 aa).

Belongs to the XseB family. As to quaternary structure, heterooligomer composed of large and small subunits.

The protein localises to the cytoplasm. It catalyses the reaction Exonucleolytic cleavage in either 5'- to 3'- or 3'- to 5'-direction to yield nucleoside 5'-phosphates.. Its function is as follows. Bidirectionally degrades single-stranded DNA into large acid-insoluble oligonucleotides, which are then degraded further into small acid-soluble oligonucleotides. The protein is Exodeoxyribonuclease 7 small subunit of Halalkalibacterium halodurans (strain ATCC BAA-125 / DSM 18197 / FERM 7344 / JCM 9153 / C-125) (Bacillus halodurans).